A 696-amino-acid chain; its full sequence is Elongation factor G (696 aa).

The tr-type G domain maps to 8–282; sequence KDYRNIGIMA…AVVDYLPSPL (275 aa). GTP contacts are provided by residues 17-24, 81-85, and 135-138; these read AHIDAGKT, DTPGH, and NKMD.

It belongs to the TRAFAC class translation factor GTPase superfamily. Classic translation factor GTPase family. EF-G/EF-2 subfamily.

The protein resides in the cytoplasm. Functionally, catalyzes the GTP-dependent ribosomal translocation step during translation elongation. During this step, the ribosome changes from the pre-translocational (PRE) to the post-translocational (POST) state as the newly formed A-site-bound peptidyl-tRNA and P-site-bound deacylated tRNA move to the P and E sites, respectively. Catalyzes the coordinated movement of the two tRNA molecules, the mRNA and conformational changes in the ribosome. In Mycoplasmopsis synoviae (strain 53) (Mycoplasma synoviae), this protein is Elongation factor G.